We begin with the raw amino-acid sequence, 474 residues long: Pyruvate kinase (474 aa).

Arg37 is a binding site for substrate. K(+) is bound by residues Asn39, Ser41, and Asp71. ATP is bound at residue 39-42 (NFSH). Residues Arg78 and Lys160 each contribute to the ATP site. Residue Glu222 participates in Mg(2+) binding. Substrate contacts are provided by Gly245, Asp246, and Thr278. Asp246 provides a ligand contact to Mg(2+).

It belongs to the pyruvate kinase family. As to quaternary structure, homotetramer. Mg(2+) serves as cofactor. The cofactor is K(+).

The enzyme catalyses pyruvate + ATP = phosphoenolpyruvate + ADP + H(+). The protein operates within carbohydrate degradation; glycolysis; pyruvate from D-glyceraldehyde 3-phosphate: step 5/5. This is Pyruvate kinase (ttuE) from Agrobacterium vitis (Rhizobium vitis).